The chain runs to 802 residues: Osmosensitive cation channel TMEM63C (802 aa).

Over 1–35 (MSAFPDSMDQKFHNMTVNECFQSRSTVLQGQPFGG) the chain is Extracellular. Residues 36–60 (IPTVLVLNIILWVFVVLLYSFLRKA) traverse the membrane as a helical segment. At 61 to 124 (AWDYGRLALL…RDRDLINKCG (64 aa)) the chain is on the cytoplasmic side. 2 positions are modified to phosphoserine: serine 75 and serine 78. Residues 125-157 (DDARIYITFQYHLIIFVLILCIPSLGIILPVNY) form a helical membrane-spanning segment. The Extracellular segment spans residues 158-180 (IGTVLDWNSHFGRTTIVNVSTES). The helical transmembrane segment at 181 to 205 (KFLWLHSLFAFLYFLINLAFMGHHC) threads the bilayer. Residues 206–401 (LGFVPKKSLH…IIWKHLSIRR (196 aa)) lie on the Cytoplasmic side of the membrane. A helical transmembrane segment spans residues 402–431 (FSWWTRFIAINTFLFFLFFFLTTPAIIINT). Over 432 to 446 (IDIYNVTRPIEKLQS) the chain is Extracellular. A helical transmembrane segment spans residues 447–476 (PIVTQFFPSVLLWAFTVTMPLLVYLSAFLE). Topologically, residues 477–480 (AHWT) are cytoplasmic. Residues 481–517 (RSSQNLIIVHKCYIFLVFMVVILPSMGLTSLHVFLRW) traverse the membrane as a helical segment. The Extracellular portion of the chain corresponds to 518-540 (LFDIYYLEHATIRFQCVFLPDNG). A helical membrane pass occupies residues 541 to 573 (AFFINYVITAALLGTGMELMRLGSLCTYCTRLF). At 574-593 (LSKSEPERVHIRKNQATDFQ) the chain is on the cytoplasmic side. Residues 594-612 (FGREYAWMLNVFSVVMAYS) form a helical membrane-spanning segment. Residues 613 to 615 (ITC) are Extracellular-facing. The chain crosses the membrane as a helical span at residues 616-640 (PIIVPFGLLYLCMKHITDRYNMYYS). Residues 641–647 (YAPTKLN) lie on the Cytoplasmic side of the membrane. Residues 648–676 (AQIHMAAVYQAIFAPLLGLFWMLFFSILR) form a helical membrane-spanning segment. The Extracellular portion of the chain corresponds to 677–681 (VGSLH). The chain crosses the membrane as a helical span at residues 682-702 (SITLFSMSSLIISVVIAFSGV). Topologically, residues 703–802 (FLGKLRIAQR…EGLEMEGQSH (100 aa)) are cytoplasmic. Positions 753–785 (TPASSPARHTYGTINSQPEEGEEESGLRGFARE) are disordered.

The protein belongs to the CSC1 (TC 1.A.17) family. As to quaternary structure, monomer.

It is found in the endoplasmic reticulum membrane. The protein localises to the cell membrane. It carries out the reaction Ca(2+)(in) = Ca(2+)(out). In terms of biological role, acts as an osmosensitive cation channel preferentially activated upon hypotonic stress. In contrast to TMEM63B, does not show phospholipid scramblase activity. Enriched in mitochondria-ER contact sites where it may regulate the metabolite flux and organelles' morphologies in response to osmotic changes. In particular may regulate mitochondrial motility and function in motor neuron axons. Required for the functional integrity of the kidney glomerular filtration barrier. This Mus musculus (Mouse) protein is Osmosensitive cation channel TMEM63C.